The following is a 664-amino-acid chain: Macoilin (664 aa).

Helical transmembrane passes span 28-48, 75-95, 120-140, and 154-174; these read TFLYLKFLVVWALVLLADFVL, AFSVFFVCVAFTSNIICLLFI, VCLPTVSLWILFVYIEAAIRF, and FAAHCIGYPVVTLGFGFKSYV. Basic and acidic residues predominate over residues 253–265; that stretch reads REKGKEKDKDAKK. Positions 253 to 274 are disordered; the sequence is REKGKEKDKDAKKHNLGINNNN. S305 is subject to Phosphoserine. Positions 320 to 348 are enriched in polar residues; sequence KNYKNASGVVNSSPRSHSATNGSIPSSSS. The disordered stretch occupies residues 320-375; it reads KNYKNASGVVNSSPRSHSATNGSIPSSSSKNEKKQKCTSKGPSAHKDLMENCIPNN. N-linked (GlcNAc...) asparagine glycosylation is present at N324. S332 carries the post-translational modification Phosphoserine. N-linked (GlcNAc...) asparagine glycosylation is found at N340 and N452. A disordered region spans residues 630–664; that stretch reads TSPLSPVSPHYSSKFVETSPSGLDPNASVYQPLKK. Residues S631 and S634 each carry the phosphoserine modification. An N-linked (GlcNAc...) asparagine glycan is attached at N655.

Belongs to the macoilin family. In terms of tissue distribution, strong expression in whole nervous system up to 12.5 dpc. Highly expressed in all neuronal differentiation fields from 14.5 dpc to birth, with highest expression in the telencephalic cortical plate and mitral cells in the olfactory bulb, and lower expression in neuronal progenitor zones. Progressively decreased expression in fields of neuron precursor proliferation from 14.5 dpc and virtually undetectable there by 17.5 dpc. No significant expression detected outside the nervous system. After birth, significant expression remains in the cerebellum, olfactory bulb and hippocampus.

It is found in the rough endoplasmic reticulum membrane. It localises to the nucleus membrane. Functionally, plays a role in the regulation of neuronal activity. This is Macoilin (Maco1) from Mus musculus (Mouse).